Here is a 419-residue protein sequence, read N- to C-terminus: MSLLAVGINHNTASVELREKVAFGPDKLSEALKQLNANAHVNGSVILSTCNRTEVYCDVKGVAKNKLIDWLSVFHQVSPEELKPSIYIHEEQAAIKHLMRVACGLDSLVLGEPQILGQVKQAYTDSRDNKSVDASMEKLFQKSFSVAKRVRTETEIGGSAVSVAYAACTLAKHIFESIAESTVLLVGAGETIELVAKHLSANGCTKMIVANRTRERALGLAEEFGAEVISLNEIPDHLHRADIVISSTASPLPIIGKGMVETALKTRKHQPMLLVDIAVPRDVESQVGDLNDAYLYSVDDLQSIVDGNIEQRKVEAIQAEAIVSEESAAFMSWMRSLQAVDSIRDYRKSANEIREELLSKSLQSLAAGGDPEKVLLELSNKLTNKLIHAPTRALQSAAEQGEPAKLTVIRQSLGLENPQ.

Substrate is bound by residues 49-52, Ser107, 112-114, and Gln118; these read TCNR and EPQ. Residue Cys50 is the Nucleophile of the active site. 187-192 contacts NADP(+); that stretch reads GAGETI.

This sequence belongs to the glutamyl-tRNA reductase family. As to quaternary structure, homodimer.

The catalysed reaction is (S)-4-amino-5-oxopentanoate + tRNA(Glu) + NADP(+) = L-glutamyl-tRNA(Glu) + NADPH + H(+). Its pathway is porphyrin-containing compound metabolism; protoporphyrin-IX biosynthesis; 5-aminolevulinate from L-glutamyl-tRNA(Glu): step 1/2. Its function is as follows. Catalyzes the NADPH-dependent reduction of glutamyl-tRNA(Glu) to glutamate 1-semialdehyde (GSA). This is Glutamyl-tRNA reductase from Vibrio atlanticus (strain LGP32) (Vibrio splendidus (strain Mel32)).